The chain runs to 149 residues: Large ribosomal subunit protein uL11 (149 aa).

It belongs to the universal ribosomal protein uL11 family. As to quaternary structure, part of the ribosomal stalk of the 50S ribosomal subunit. Interacts with L10 and the large rRNA to form the base of the stalk. L10 forms an elongated spine to which L12 dimers bind in a sequential fashion forming a multimeric L10(L12)X complex. Post-translationally, one or more lysine residues are methylated.

In terms of biological role, forms part of the ribosomal stalk which helps the ribosome interact with GTP-bound translation factors. The polypeptide is Large ribosomal subunit protein uL11 (Xanthobacter autotrophicus (strain ATCC BAA-1158 / Py2)).